Here is a 553-residue protein sequence, read N- to C-terminus: Hydroxylamine reductase (553 aa).

4 residues coordinate [2Fe-2S] cluster: cysteine 3, cysteine 6, cysteine 18, and cysteine 25. Residues histidine 252, glutamate 276, cysteine 320, cysteine 408, cysteine 436, cysteine 461, glutamate 495, and lysine 497 each coordinate hybrid [4Fe-2O-2S] cluster. Cysteine 408 is subject to Cysteine persulfide.

Belongs to the HCP family. The cofactor is [2Fe-2S] cluster. Hybrid [4Fe-2O-2S] cluster serves as cofactor.

It is found in the cytoplasm. It carries out the reaction A + NH4(+) + H2O = hydroxylamine + AH2 + H(+). Catalyzes the reduction of hydroxylamine to form NH(3) and H(2)O. This chain is Hydroxylamine reductase, found in Vibrio parahaemolyticus serotype O3:K6 (strain RIMD 2210633).